A 1034-amino-acid polypeptide reads, in one-letter code: Sodium bicarbonate cotransporter 3 (1034 aa).

Disordered stretches follow at residues 1–31 (MEADGAGEQMRPLLTRGPDEEAVVDLGKTSS) and 53–99 (HVPF…SQRV). At 1-476 (MEADGAGEQM…DFKDALSLQC (476 aa)) the chain is on the extracellular side. Phosphoserine is present on residues Ser-57, Ser-60, Ser-89, and Ser-155. Residues 60–77 (SRRRHKHRGHKHHHRRRK) are compositionally biased toward basic residues. Positions 78-90 (DKDSDKEDGRESP) are enriched in basic and acidic residues. The N-linked (GlcNAc...) asparagine glycan is linked to Asn-176. Phosphoserine occurs at positions 238, 250, 260, 263, 268, and 271. Residues 250-260 (SAPGNLDNSKS) show a composition bias toward polar residues. Residues 250–276 (SAPGNLDNSKSGEMKGNGSGGSRENST) are disordered. Asn-274 is a glycosylation site (N-linked (GlcNAc...) asparagine). A phosphoserine mark is found at Ser-275 and Ser-424. The chain crosses the membrane as a helical span at residues 477 to 497 (LASILFLYCACMSPVITFGGL). At 498–505 (LGEATEGR) the chain is on the cytoplasmic side. A helical transmembrane segment spans residues 506-526 (ISAIESLFGASLTGIAYSLFA). The Extracellular segment spans residues 527-563 (GQPLTILGSTGPVLVFEKILFKFCRDYHLSYLSLRTS). Residues 564-584 (IGLWTSFLCIVLVATDASSLV) form a helical membrane-spanning segment. Topologically, residues 585–593 (CYITRFTEE) are cytoplasmic. Residues 594-614 (AFAALICIIFIYEALEKLFHL) form a helical membrane-spanning segment. Topologically, residues 615–685 (GEIYAFNMHN…MFVGSACGPH (71 aa)) are extracellular. A disulfide bridge connects residues Cys-634 and Cys-636. 3 N-linked (GlcNAc...) asparagine glycosylation sites follow: Asn-644, Asn-654, and Asn-664. Cysteines 670 and 682 form a disulfide. Residues 686–706 (GPYVPDVLFWCVVLFFTTFFL) traverse the membrane as a helical segment. Topologically, residues 707–729 (SSFLKQFKTKGYFPTKVRSTISD) are cytoplasmic. Residues 730-750 (FAVFLTIVIMVAIDYLVGIPS) traverse the membrane as a helical segment. Residues 751–776 (PKLHVPEKFEPTDPSRGWIISPLGDN) are Extracellular-facing. The chain crosses the membrane as a helical span at residues 777-797 (PWWTLLIAAVPALLCTILIFM). The Cytoplasmic portion of the chain corresponds to 798-812 (DQQITAVIINRKEHK). Residues 813-833 (LKFIPMPVLYGVFLYMGVSSL) form a helical membrane-spanning segment. Residues 815–915 (FIPMPVLYGV…MDLCFTKREL (101 aa)) form an essential for cell membrane localization and transport activity region. Topologically, residues 834 to 876 (KGIQFFDRIKLFGMPAKHQPDLIYLRYVPLWKVHVFTVVQLTC) are extracellular. The helical transmembrane segment at 877–897 (LVLLWVIKASAAAVVFPMMVL) threads the bilayer. The Cytoplasmic segment spans residues 898 to 1034 (ALVFVRKLMD…KKYMDAETSL (137 aa)). The segment at 918–920 (LDD) is CA2-binding. Residues 926–946 (KKKKEDDKKKKEKEEAERMLQ) are disordered. Thr-951 carries the post-translational modification Phosphothreonine. Phosphoserine occurs at positions 960 and 1033. The PDZ-binding motif lies at 1031–1034 (ETSL).

This sequence belongs to the anion exchanger (TC 2.A.31) family. As to quaternary structure, forms a complex with ATP6V1B1 and NHERF1/EBP50. Interacts in a pH dependent-manner with CA2/carbonic anhydrase 2. Interacts with CFTR through NHERF1/EBP50. Interacts with USH1C. As to expression, expressed in the spiral ligament throughout the cochlea and in photoreceptors of the outer plexiform layer of the retina (at protein level).

It localises to the basolateral cell membrane. It is found in the apical cell membrane. The protein resides in the cell projection. Its subcellular location is the stereocilium. The protein localises to the cell membrane. It catalyses the reaction hydrogencarbonate(in) + Na(+)(in) = hydrogencarbonate(out) + Na(+)(out). Its activity is regulated as follows. Activity is inhibited by 4,4'-di-isothiocyanatostilbene-2,2'-disulfonic acid (DIDS - an inhibitor of several anion channels and transporters). In terms of biological role, electroneutral sodium- and bicarbonate-dependent cotransporter with a Na(+):HCO3(-) 1:1 stoichiometry. Mediates the sodium-dependent bicarbonate transport important for pH recovery after acid load as well as for regulation of steady-state pH in the duodenum and vascular smooth muscle cells. Plays a key role in macrophage acidification, mediating bicarbonate import into the cytoplasm which is crucial for net acid extrusion and maintenance of cytoplasmic pH during phagocytosis. Provides cellular bicarbonate for de novo purine and pyrimidine synthesis and is a key mediator of de novo nucleotide synthesis downstream of mTORC1 signaling in proliferating cells. May be involved in maintaining locomotor activity, exploratory behavior, and hearing. In Mus musculus (Mouse), this protein is Sodium bicarbonate cotransporter 3 (Slc4a7).